The sequence spans 721 residues: Cell wall protein RBT1 (721 aa).

The first 20 residues, methionine 1 to alanine 20, serve as a signal peptide directing secretion. Residues glycine 55–serine 278 enclose the Flo11 domain. Disordered stretches follow at residues serine 278 to threonine 410, leucine 453 to glutamate 510, and threonine 555 to serine 666. Residues threonine 454–glutamate 499 show a composition bias toward low complexity. Positions threonine 500 to glutamate 510 are enriched in polar residues. Composition is skewed to low complexity over residues threonine 555–threonine 575 and serine 584–alanine 663. Serine 696 carries the GPI-anchor amidated serine lipid modification. A propeptide spans serine 697–isoleucine 721 (removed in mature form).

Belongs to the HWP1 family. The GPI-anchor is attached to the protein in the endoplasmic reticulum and serves to target the protein to the cell surface. There, the glucosamine-inositol phospholipid moiety is cleaved off and the GPI-modified mannoprotein is covalently attached via its lipidless GPI glycan remnant to the 1,6-beta-glucan of the outer cell wall layer.

The protein resides in the secreted. The protein localises to the cell wall. Its subcellular location is the membrane. In terms of biological role, GPI-anchored cell wall protein required for mating efficiency, biofilm formation, and virulence. Involved in normal disseminated infection, but not in intestinal colonization. The polypeptide is Cell wall protein RBT1 (RBT1) (Candida albicans (strain SC5314 / ATCC MYA-2876) (Yeast)).